A 195-amino-acid polypeptide reads, in one-letter code: dITP/XTP pyrophosphatase (195 aa).

8-13 is a binding site for substrate; that stretch reads SNNQGK. Residues Glu39 and Asp68 each coordinate Mg(2+). Asp68 functions as the Proton acceptor in the catalytic mechanism. Substrate is bound by residues Ser69, 149–152, Lys172, and 177–178; these read FGYD and HR.

Belongs to the HAM1 NTPase family. Homodimer. It depends on Mg(2+) as a cofactor.

The enzyme catalyses XTP + H2O = XMP + diphosphate + H(+). It catalyses the reaction dITP + H2O = dIMP + diphosphate + H(+). It carries out the reaction ITP + H2O = IMP + diphosphate + H(+). In terms of biological role, pyrophosphatase that catalyzes the hydrolysis of nucleoside triphosphates to their monophosphate derivatives, with a high preference for the non-canonical purine nucleotides XTP (xanthosine triphosphate), dITP (deoxyinosine triphosphate) and ITP. Seems to function as a house-cleaning enzyme that removes non-canonical purine nucleotides from the nucleotide pool, thus preventing their incorporation into DNA/RNA and avoiding chromosomal lesions. The polypeptide is dITP/XTP pyrophosphatase (Staphylococcus aureus (strain Mu50 / ATCC 700699)).